A 316-amino-acid polypeptide reads, in one-letter code: MLNVEPSFAEELRSSGVSLSATYLGSVPVVESINVMVSEMRVQVVSECIQHVAATVGVTAAREINPVVSRVIGEVKKENFPVDINISSKMIKIIKQSRLIQRHPFSFFSFGAQGQKGTDTELMFGYIAKNKDGTDRRCHVVFIEDVHKLIDVLTTAINVNTFDAQANASTSNDGFTVPAPPMRHRSSLHRQSFVSNCRAPTVTEDVVGKVWYHGNLSREDAQALLKTEGDFLVRQSDHTPGKYVLSGRTAENEHKHLILLDNHNRVRTRDRTFSNISELIDYHVNNGMAVRSEGRDRETSLNLIRPVPCPGSDDIE.

The PID domain occupies 16–158 (GVSLSATYLG…LIDVLTTAIN (143 aa)). One can recognise an SH2 domain in the interval 211–307 (WYHGNLSRED…ETSLNLIRPV (97 aa)). Positions 292–316 (SEGRDRETSLNLIRPVPCPGSDDIE) are disordered.

In terms of assembly, interacts (via PID domain) with daf-2 (via cytoplasmic domain). Interacts with mek-1; the interaction is independent of mek-1 catalytic activity and is constitutive. Interacts (via N-terminus) with mlk-1 (via NPQY motif when phosphorylated on tyrosine residue). Does not interact with jkk-1 or sek-1. Interacts (via SH2 domain) with svh-2. Interacts with svh-4. Expressed in hypodermis, intestine, head and tail neurons, pharynx, gonads, vulva and body muscles.

The protein resides in the cytoplasm. It localises to the nucleus. It is found in the cell membrane. Its function is as follows. Scaffold protein which plays an important role in the activation of the JNK pathway composed of mlk-1, mek-1 and kgb-1; by bringing together mek-1 and mlk-1, promotes mlk-1-mediated phosphorylation and activation of mek-1 which in turn phosphorylates kgb-1. In addition, negatively modulates the activation of the insulin/IGF-1-like signaling (IIS) probably by inhibiting the insulin receptor daf-2. Positively regulates the activity of the transcription factor daf-16/FOXO by both inhibiting IIS and activating the JNK pathway. Plays a role in maintaining gonadal basement membrane integrity through activation of the JNK pathway components mek-1 and jnk-1. Involved in the response to several environmental stresses including heavy metal ions (Cu(2+) and Cd(2+)), heat, oxidative and protein misfolding (ER) stresses. Plays a role in gonad and germline development following the L1 diapause. Plays a role in life span and egg laying. Plays a role in axon regeneration after injury. The polypeptide is SHC-transforming protein homolog 1 (Caenorhabditis elegans).